Here is a 65-residue protein sequence, read N- to C-terminus: Trypsin inhibitor (65 aa).

As to quaternary structure, homotrimer.

The polypeptide is Trypsin inhibitor (Zea mays (Maize)).